Consider the following 640-residue polypeptide: Biosynthetic arginine decarboxylase (640 aa).

An N6-(pyridoxal phosphate)lysine modification is found at K109. Substrate is bound at residue 291-301 (LDVGGGLGVDY).

The protein belongs to the Orn/Lys/Arg decarboxylase class-II family. SpeA subfamily. The cofactor is Mg(2+). Requires pyridoxal 5'-phosphate as cofactor.

The catalysed reaction is L-arginine + H(+) = agmatine + CO2. It functions in the pathway amine and polyamine biosynthesis; agmatine biosynthesis; agmatine from L-arginine: step 1/1. Catalyzes the biosynthesis of agmatine from arginine. This Synechococcus sp. (strain RCC307) protein is Biosynthetic arginine decarboxylase.